The chain runs to 448 residues: MAISQPVIYTVSRLNNVVRLLLEQEMGLVWLTAEISNLVQHSSGHWYFTLKDQQAQIRAAMFKGQNRRVSFRPQNGQQILVQGQLSLYEARGDYQLIVEKMQPAGDGLLQMKLEALKARLMAEGLFDPRRKRALPTQPKQIGIITSPTGAAIHDMLTILARRDPALPVILYPSAVQGESAVPALLNALETAWRRNECDLLIIGRGGGSLEDLWCFNDELVVRAIANSPIPIVSAVGHETDVTLSDFAADLRAPTPSAAAELVSRDQQQQLHRLAQYQHRLQQAIQLRLQQHQIAWQQQYARLNTQNPRYQLQQKIQKQDELQFRLERVMTQTLVQANQQWMSQHQRLQQVSPKRQLPNLQKQHAYLYQRLLNAMQSKQQDSAQTLSRLSGQLHALSPLQVLARGYSVTTNAKGELIHSSQQVTTGEMLNVQLHQGTLKVRTEEVKSEN.

The protein belongs to the XseA family. Heterooligomer composed of large and small subunits.

It localises to the cytoplasm. It carries out the reaction Exonucleolytic cleavage in either 5'- to 3'- or 3'- to 5'-direction to yield nucleoside 5'-phosphates.. In terms of biological role, bidirectionally degrades single-stranded DNA into large acid-insoluble oligonucleotides, which are then degraded further into small acid-soluble oligonucleotides. This chain is Exodeoxyribonuclease 7 large subunit, found in Tolumonas auensis (strain DSM 9187 / NBRC 110442 / TA 4).